We begin with the raw amino-acid sequence, 60 residues long: Colanic acid capsular biosynthesis activation protein B (60 aa).

In Klebsiella aerogenes (Enterobacter aerogenes), this protein is Colanic acid capsular biosynthesis activation protein B (rcsB).